The primary structure comprises 105 residues: Small ribosomal subunit protein uS10 (105 aa).

This sequence belongs to the universal ribosomal protein uS10 family. In terms of assembly, part of the 30S ribosomal subunit.

Functionally, involved in the binding of tRNA to the ribosomes. This Acaryochloris marina (strain MBIC 11017) protein is Small ribosomal subunit protein uS10.